Reading from the N-terminus, the 388-residue chain is Processive diacylglycerol beta-glucosyltransferase (388 aa).

This sequence belongs to the glycosyltransferase 28 family. UgtP subfamily.

It is found in the cell membrane. It carries out the reaction a 1,2-diacyl-3-O-(beta-D-glucopyranosyl)-sn-glycerol + UDP-alpha-D-glucose = a 1,2-diacyl-3-O-(beta-D-Glc-(1-&gt;6)-beta-D-Glc)-sn-glycerol + UDP + H(+). It catalyses the reaction a 1,2-diacyl-3-O-(beta-D-Glc-(1-&gt;6)-beta-D-Glc)-sn-glycerol + UDP-alpha-D-glucose = a 1,2-diacyl-3-O-(beta-D-Glc-(1-&gt;6)-beta-D-Glc-(1-&gt;6)-beta-D-Glc)-sn-glycerol + UDP + H(+). The catalysed reaction is a 1,2-diacyl-sn-glycerol + UDP-alpha-D-glucose = a 1,2-diacyl-3-O-(beta-D-glucopyranosyl)-sn-glycerol + UDP + H(+). It participates in glycolipid metabolism; diglucosyl-diacylglycerol biosynthesis. Processive glucosyltransferase involved in the biosynthesis of both the bilayer- and non-bilayer-forming membrane glucolipids. Is able to successively transfer up to three glucosyl residues to diacylglycerol (DAG), thereby catalyzing the formation of beta-monoglucosyl-DAG (3-O-(beta-D-glucopyranosyl)-1,2-diacyl-sn-glycerol), beta-diglucosyl-DAG (3-O-(beta-D-glucopyranosyl-beta-(1-&gt;6)-D-glucopyranosyl)-1,2-diacyl-sn-glycerol) and beta-triglucosyl-DAG (3-O-(beta-D-glucopyranosyl-beta-(1-&gt;6)-D-glucopyranosyl-beta-(1-&gt;6)-D-glucopyranosyl)-1,2-diacyl-sn-glycerol). Beta-diglucosyl-DAG is the predominant glycolipid found in Bacillales and is also used as a membrane anchor for lipoteichoic acid (LTA). This Bacillus cytotoxicus (strain DSM 22905 / CIP 110041 / 391-98 / NVH 391-98) protein is Processive diacylglycerol beta-glucosyltransferase.